A 205-amino-acid polypeptide reads, in one-letter code: GTP cyclohydrolase 1 (205 aa).

Residues Cys-93, His-96, and Cys-166 each contribute to the Zn(2+) site.

The protein belongs to the GTP cyclohydrolase I family. Homomer.

It catalyses the reaction GTP + H2O = 7,8-dihydroneopterin 3'-triphosphate + formate + H(+). Its pathway is cofactor biosynthesis; 7,8-dihydroneopterin triphosphate biosynthesis; 7,8-dihydroneopterin triphosphate from GTP: step 1/1. In Mycobacterium leprae (strain Br4923), this protein is GTP cyclohydrolase 1.